The sequence spans 127 residues: uncharacterized protein (127 aa).

A run of 2 helical transmembrane segments spans residues 42–62 (LLIS…IAFI) and 78–98 (GLPI…YYFL).

The protein resides in the membrane. This is an uncharacterized protein from Schizosaccharomyces pombe (strain 972 / ATCC 24843) (Fission yeast).